We begin with the raw amino-acid sequence, 1214 residues long: RNA-directed RNA polymerase VP1 (1214 aa).

The RdRp catalytic domain occupies 610-805 (APHDVMAPQL…KRTIVGNNVA (196 aa)).

This sequence belongs to the reoviridae RNA-directed RNA polymerase family.

It localises to the virion. The catalysed reaction is RNA(n) + a ribonucleoside 5'-triphosphate = RNA(n+1) + diphosphate. Its function is as follows. RNA-directed RNA polymerase that is involved in transcription and genome replication. Following infection, it catalyzes the synthesis of fully conservative plus strands. After core assembly, which consists in recruitment of one capped plus-strand for each genomic segments and polymerase complexes, the polymerase switches mode and catalyzes the synthesis of complementary minus-strands. In Banna virus (BAV), this protein is RNA-directed RNA polymerase VP1 (Segment-1).